Reading from the N-terminus, the 412-residue chain is Lipoyl synthase, mitochondrial (412 aa).

A mitochondrion-targeting transit peptide spans 1-28; the sequence is MASIAPSLKRAHAPLRKALTASSTIRAF. Residues Cys124, Cys129, Cys135, Cys155, Cys159, Cys162, and Ser372 each contribute to the [4Fe-4S] cluster site. In terms of domain architecture, Radical SAM core spans 138–361; the sequence is GSDKNAATAT…NKRALDMGFL (224 aa).

The protein belongs to the radical SAM superfamily. Lipoyl synthase family. It depends on [4Fe-4S] cluster as a cofactor.

The protein localises to the mitochondrion. The catalysed reaction is [[Fe-S] cluster scaffold protein carrying a second [4Fe-4S](2+) cluster] + N(6)-octanoyl-L-lysyl-[protein] + 2 oxidized [2Fe-2S]-[ferredoxin] + 2 S-adenosyl-L-methionine + 4 H(+) = [[Fe-S] cluster scaffold protein] + N(6)-[(R)-dihydrolipoyl]-L-lysyl-[protein] + 4 Fe(3+) + 2 hydrogen sulfide + 2 5'-deoxyadenosine + 2 L-methionine + 2 reduced [2Fe-2S]-[ferredoxin]. It participates in protein modification; protein lipoylation via endogenous pathway; protein N(6)-(lipoyl)lysine from octanoyl-[acyl-carrier-protein]: step 2/2. Functionally, catalyzes the radical-mediated insertion of two sulfur atoms into the C-6 and C-8 positions of the octanoyl moiety bound to the lipoyl domains of lipoate-dependent enzymes, thereby converting the octanoylated domains into lipoylated derivatives. The chain is Lipoyl synthase, mitochondrial from Fusarium vanettenii (strain ATCC MYA-4622 / CBS 123669 / FGSC 9596 / NRRL 45880 / 77-13-4) (Fusarium solani subsp. pisi).